Consider the following 479-residue polypeptide: Cardiolipin synthase A (479 aa).

A run of 2 helical transmembrane segments spans residues 8-28 (LLAY…IHAV) and 38-58 (IAWA…YLIF). 2 PLD phosphodiesterase domains span residues 218-245 (VNFR…GDEY) and 392-419 (TPGF…DNRS). Active-site residues include His-223, Lys-225, Asp-230, His-397, Lys-399, and Asp-404.

Belongs to the phospholipase D family. Cardiolipin synthase subfamily. ClsA sub-subfamily.

Its subcellular location is the cell inner membrane. It carries out the reaction 2 a 1,2-diacyl-sn-glycero-3-phospho-(1'-sn-glycerol) = a cardiolipin + glycerol. In terms of biological role, catalyzes the reversible phosphatidyl group transfer from one phosphatidylglycerol molecule to another to form cardiolipin (CL) (diphosphatidylglycerol) and glycerol. The polypeptide is Cardiolipin synthase A (Pseudomonas fluorescens (strain SBW25)).